A 361-amino-acid polypeptide reads, in one-letter code: Phenylalanine--tRNA ligase alpha subunit (361 aa).

A Mg(2+)-binding site is contributed by glutamate 260.

The protein belongs to the class-II aminoacyl-tRNA synthetase family. Phe-tRNA synthetase alpha subunit type 1 subfamily. As to quaternary structure, tetramer of two alpha and two beta subunits. The cofactor is Mg(2+).

Its subcellular location is the cytoplasm. The enzyme catalyses tRNA(Phe) + L-phenylalanine + ATP = L-phenylalanyl-tRNA(Phe) + AMP + diphosphate + H(+). This Allorhizobium ampelinum (strain ATCC BAA-846 / DSM 112012 / S4) (Agrobacterium vitis (strain S4)) protein is Phenylalanine--tRNA ligase alpha subunit.